Here is a 285-residue protein sequence, read N- to C-terminus: UstYa family oxidase phomYe (285 aa).

Residues 32–54 form a helical membrane-spanning segment; that stretch reads LFYGWKGIAFLSTLTNVLFISGF. Residues 143–165 are disordered; it reads YGFGTPLTGPGSEGNEHDPTPWT. The HXXHC 1 signature appears at 177 to 181; the sequence is HQLHC. A glycan (N-linked (GlcNAc...) asparagine) is linked at Asn202. The HXXHC 2 motif lies at 209-213; that stretch reads HVDHC.

The protein belongs to the ustYa family.

The protein localises to the membrane. Its pathway is mycotoxin biosynthesis. Its function is as follows. UstYa family oxidase; part of the gene cluster that mediates the biosynthesis of the phomopsins, a group of hexapeptide mycotoxins which infects lupins and causes lupinosis disease in livestock. Within the pathway, phomYe catalyzes the desaturation of the Pro moiety into 3,4-dehydroproline (dPro). The pathway starts with the processing of the precursor phomA by several endopeptidases including kexin proteases as well as the cluster-specific S41 family peptidase phomP1 and the oligopeptidase phomG to produce 10 identical copies of the hexapeptide Tyr-Val-Ile-Pro-Ile-Asp. After being excised from the precursor peptide, the core peptides are cyclized and modified post-translationally by enzymes encoded within the gene cluster. The timing and order of proteolysis of the phomA precursor and PTMs are still unknown. Two tyrosinase-like enzymes, phomQ1 and phomQ2, catalyze the chlorination and hydroxylation of Tyr, respectively. PhomYb, is proposed to be involved in the construction of the macrocyclic structure. The other 4 ustYa family proteins may be involved in PTMs that generate the unique structure of phomopsin A. PhomYa is required for the hydroxylation of C-beta of Tyr. PhomYc, phomYd, and phomYe are responsible for the biosynthesis of 2,3-dehydroisoleucine (dIle), 2,3-dehydroaspartic acid (dAsp), and 3,4-dehydroproline (dPro), respectively. While dIle formation by phomYc is indispensable for the installation of dAsp by phomYd, the order of the other PTMs have not been elucidated yet. Most of the biosynthetic enzymes likely have broad substrate specificity, and thus, there might be a metabolic grid from a precursor to phomopsin A. The enzyme(s) responsible for the biosynthesis of 3,4-dehydrovaline (dVal) have also not been identified yet. Finally, phomM acts as an S-adenosylmethionine-dependent alpha-N-methyltransferase that catalyzes two successive N-methylation reactions, converting N-desmethyl-phomopsin A to phomopsin A and phomopsin A further to an N,N-dimethylated congener called phomopsin E. The chain is UstYa family oxidase phomYe from Diaporthe leptostromiformis (Lupinosis disease fungus).